The following is a 280-amino-acid chain: 3-hydroxyanthranilate 3,4-dioxygenase (280 aa).

Positions 1–160 are domain A (catalytic); that stretch reads MAIPVNVKKW…SEQYKSGKPD (160 aa). An O2-binding site is contributed by Arg-43. His-47, Glu-53, and His-91 together coordinate Fe cation. Glu-53 contacts substrate. Arg-95 and Glu-105 together coordinate substrate. The interval 161-177 is linker; sequence PAQPIGKMPFFLNTEQV. The segment at 178–280 is domain B; that stretch reads MEPFSFQNWL…IALSTSQVPA (103 aa).

This sequence belongs to the 3-HAO family. In terms of assembly, monomer. Fe(2+) serves as cofactor.

The protein resides in the cytoplasm. It localises to the cytosol. The enzyme catalyses 3-hydroxyanthranilate + O2 = (2Z,4Z)-2-amino-3-carboxymuconate 6-semialdehyde. The protein operates within cofactor biosynthesis; NAD(+) biosynthesis; quinolinate from L-kynurenine: step 3/3. Catalyzes the oxidative ring opening of 3-hydroxyanthranilate to 2-amino-3-carboxymuconate semialdehyde, which spontaneously cyclizes to quinolinate. The chain is 3-hydroxyanthranilate 3,4-dioxygenase (haao) from Xenopus tropicalis (Western clawed frog).